The sequence spans 112 residues: MYB-like transcription factor ETC2 (112 aa).

Residues 41–78 (TEQEEDLISRMYRLVGNRWDLIAGRVVGRKANEIERYW) enclose the Myb-like domain.

Interacts with GL3. Expressed in stomatal guard mother cells, young stomata and trichomes of young leaves, and inflorescences.

Its subcellular location is the nucleus. Functionally, MYB-type transcription factor involved in epidermal cell fate specification. Acts as a negative regulator of trichome development, by mediating lateral inhibition. Promotes the formation of hair developing cells in H position in root epidermis, probably by inhibiting non-hair cell formation. The sequence is that of MYB-like transcription factor ETC2 (ETC2) from Arabidopsis thaliana (Mouse-ear cress).